Reading from the N-terminus, the 452-residue chain is UPF0210 protein Daud_1353 (452 aa).

It belongs to the UPF0210 family. Homodimer.

The protein is UPF0210 protein Daud_1353 of Desulforudis audaxviator (strain MP104C).